Reading from the N-terminus, the 302-residue chain is UDP-N-acetylenolpyruvoylglucosamine reductase (302 aa).

The FAD-binding PCMH-type domain occupies 27–192 (KVGGAVDYLA…LSAKFALRPG (166 aa)). Residue Arg-171 is part of the active site. Ser-221 serves as the catalytic Proton donor. The active site involves Glu-291.

This sequence belongs to the MurB family. FAD is required as a cofactor.

The protein resides in the cytoplasm. It carries out the reaction UDP-N-acetyl-alpha-D-muramate + NADP(+) = UDP-N-acetyl-3-O-(1-carboxyvinyl)-alpha-D-glucosamine + NADPH + H(+). It functions in the pathway cell wall biogenesis; peptidoglycan biosynthesis. Its function is as follows. Cell wall formation. The protein is UDP-N-acetylenolpyruvoylglucosamine reductase of Streptococcus suis (strain 98HAH33).